The sequence spans 368 residues: Alanine racemase (368 aa).

Residue Lys-40 is the Proton acceptor; specific for D-alanine of the active site. Lys-40 is subject to N6-(pyridoxal phosphate)lysine. Arg-134 is a substrate binding site. Tyr-263 acts as the Proton acceptor; specific for L-alanine in catalysis. Met-310 is a binding site for substrate.

Belongs to the alanine racemase family. Pyridoxal 5'-phosphate serves as cofactor.

It catalyses the reaction L-alanine = D-alanine. The protein operates within amino-acid biosynthesis; D-alanine biosynthesis; D-alanine from L-alanine: step 1/1. In terms of biological role, catalyzes the interconversion of L-alanine and D-alanine. May also act on other amino acids. This chain is Alanine racemase (alr), found in Listeria monocytogenes serotype 4a (strain HCC23).